Consider the following 82-residue polypeptide: Sec-independent protein translocase protein TatA (82 aa).

The helical transmembrane segment at 1–21 (MGGISVWQLLIIAVIVVLLFG) threads the bilayer. A disordered region spans residues 41 to 82 (KAMSEDEPAKKDDKDADFEPKSLEEQQKKEAAPESKKDKEQA). Over residues 42–82 (AMSEDEPAKKDDKDADFEPKSLEEQQKKEAAPESKKDKEQA) the composition is skewed to basic and acidic residues.

This sequence belongs to the TatA/E family. As to quaternary structure, the Tat system comprises two distinct complexes: a TatABC complex, containing multiple copies of TatA, TatB and TatC subunits, and a separate TatA complex, containing only TatA subunits. Substrates initially bind to the TatABC complex, which probably triggers association of the separate TatA complex to form the active translocon.

It localises to the cell inner membrane. Functionally, part of the twin-arginine translocation (Tat) system that transports large folded proteins containing a characteristic twin-arginine motif in their signal peptide across membranes. TatA could form the protein-conducting channel of the Tat system. The chain is Sec-independent protein translocase protein TatA from Vibrio campbellii (strain ATCC BAA-1116).